Consider the following 356-residue polypeptide: MSRFWSQVVRDLTPYVPGEQPKIANLIKLNTNENPFPPSPRVVAAIQAELGDDAARLRLYPDPNADLLKAAVARRHTVSAQQVFVGNGSDEVLAHIFMALLKHDQPIIFPDITYSFYPVYCGLYGVEYQTLPLADDFSINPADYCDRPNGGIIFPNPNAPTGRLLPLDAIEQMLKANPDSVVVVDEAYVDFGGETAISLVDRYDNLLVVHTLSKSRSLAGMRVGFAVGHAALIEALERVKNSFNSYPLDRLAIVAAVAAMEDEAYFAQCCHAVMATRNTLTAELTELGFEVLPSTANFIFTRHPQRDAAELAKALRERNIIVRHFKLPRIDQFLRITVGTDGECKALTDALRQITG.

N6-(pyridoxal phosphate)lysine is present on Lys-214.

This sequence belongs to the class-II pyridoxal-phosphate-dependent aminotransferase family. Histidinol-phosphate aminotransferase subfamily. In terms of assembly, homodimer. Pyridoxal 5'-phosphate serves as cofactor.

The enzyme catalyses L-histidinol phosphate + 2-oxoglutarate = 3-(imidazol-4-yl)-2-oxopropyl phosphate + L-glutamate. Its pathway is amino-acid biosynthesis; L-histidine biosynthesis; L-histidine from 5-phospho-alpha-D-ribose 1-diphosphate: step 7/9. The chain is Histidinol-phosphate aminotransferase 2 from Dechloromonas aromatica (strain RCB).